A 219-amino-acid chain; its full sequence is Eukaryotic translation initiation factor 3 subunit K (219 aa).

One can recognise a PCI domain in the interval 43 to 205 (YDLEANLAVL…SVKPKNIVEK (163 aa)).

It belongs to the eIF-3 subunit K family. Component of the eukaryotic translation initiation factor 3 (eIF-3) complex, which is composed of 13 subunits: eif3a, eif3b, eif3c, eif3d, eif3e, eif3f, eif3g, eif3h, eif3i, eif3j, eif3k, eif3l and eif3m.

The protein localises to the nucleus. It localises to the cytoplasm. Functionally, component of the eukaryotic translation initiation factor 3 (eIF-3) complex, which is involved in protein synthesis of a specialized repertoire of mRNAs and, together with other initiation factors, stimulates binding of mRNA and methionyl-tRNAi to the 40S ribosome. The eIF-3 complex specifically targets and initiates translation of a subset of mRNAs involved in cell proliferation. The polypeptide is Eukaryotic translation initiation factor 3 subunit K (eif3k) (Danio rerio (Zebrafish)).